The chain runs to 207 residues: Glycerol-3-phosphate acyltransferase (207 aa).

A run of 6 helical transmembrane segments spans residues 1–21, 42–62, 65–85, 105–125, 138–158, and 159–179; these read MIIIAYLLGSIQTGLWIGKYF, ILGVKAGIVTLTIDILKGTLA, IPIILGITTISPFFIGFFAII, AGVLLGFAPSFFLYLLVIFLL, ITVAVVGILSVLIFPLVGFIL, and TDYDWIFTTVVILMALTIIIR.

Belongs to the PlsY family. As to quaternary structure, probably interacts with PlsX.

The protein resides in the cell membrane. The catalysed reaction is an acyl phosphate + sn-glycerol 3-phosphate = a 1-acyl-sn-glycero-3-phosphate + phosphate. The protein operates within lipid metabolism; phospholipid metabolism. Catalyzes the transfer of an acyl group from acyl-phosphate (acyl-PO(4)) to glycerol-3-phosphate (G3P) to form lysophosphatidic acid (LPA). This enzyme utilizes acyl-phosphate as fatty acyl donor, but not acyl-CoA or acyl-ACP. The sequence is that of Glycerol-3-phosphate acyltransferase from Streptococcus agalactiae serotype Ia (strain ATCC 27591 / A909 / CDC SS700).